Here is a 410-residue protein sequence, read N- to C-terminus: Transcription factor PHYTOCHROME INTERACTING FACTOR-LIKE 13 (410 aa).

Low complexity predominate over residues 82–92 (AAAAAGPSSHH). Disordered regions lie at residues 82 to 110 (AAAAAGPSSHHAPPPDLPPPAARPPMRSG) and 137 to 225 (CRDA…AEVH). Residues 93–104 (APPPDLPPPAAR) show a composition bias toward pro residues. A compositionally biased stretch (basic and acidic residues) spans 187-197 (GREDSDSRSED). Basic residues predominate over residues 209 to 219 (SSRRYGSKRRT). Positions 220–233 (RAAEVHNLSERRRR) are basic motif. One can recognise a bHLH domain in the interval 220–269 (RAAEVHNLSERRRRDRINEKMRALQELIPHCNKTDKASILDEAIEYLKSL). The tract at residues 234 to 269 (DRINEKMRALQELIPHCNKTDKASILDEAIEYLKSL) is helix-loop-helix motif. The segment at 357 to 410 (PFLHPDGWQTVPPQVSGPYASGPQVAQQNQIPKASASTVLPNSGAEQPPTSDGI) is disordered. Positions 380–410 (QVAQQNQIPKASASTVLPNSGAEQPPTSDGI) are enriched in polar residues.

Belongs to the bHLH protein family. Interacts with PRR1. Interacts with LF. Highly expressed in the node portions of the stem. Expressed in the leaves and the basal part of shoots.

It is found in the nucleus. Its function is as follows. Transcription factor that may act as negative regulator of phyB-dependent light signal transduction. Transcription activator that acts as a positive regulator of internode elongation. May function via regulation of cell wall-related genes. May play a role in a drought-associated growth-restriction mechanism in response to drought stress. The sequence is that of Transcription factor PHYTOCHROME INTERACTING FACTOR-LIKE 13 from Oryza sativa subsp. japonica (Rice).